Reading from the N-terminus, the 261-residue chain is Indole-3-glycerol phosphate synthase (261 aa).

This sequence belongs to the TrpC family.

The catalysed reaction is 1-(2-carboxyphenylamino)-1-deoxy-D-ribulose 5-phosphate + H(+) = (1S,2R)-1-C-(indol-3-yl)glycerol 3-phosphate + CO2 + H2O. It functions in the pathway amino-acid biosynthesis; L-tryptophan biosynthesis; L-tryptophan from chorismate: step 4/5. The sequence is that of Indole-3-glycerol phosphate synthase from Paraburkholderia phytofirmans (strain DSM 17436 / LMG 22146 / PsJN) (Burkholderia phytofirmans).